The primary structure comprises 709 residues: Elongation factor G (709 aa).

The region spanning 8 to 297 (ANTRNIGIMA…AVIDYLPSPL (290 aa)) is the tr-type G domain. Residues 17 to 24 (AHVDAGKT), 81 to 85 (DTPGH), and 135 to 138 (NKMD) contribute to the GTP site.

It belongs to the TRAFAC class translation factor GTPase superfamily. Classic translation factor GTPase family. EF-G/EF-2 subfamily.

It localises to the cytoplasm. Catalyzes the GTP-dependent ribosomal translocation step during translation elongation. During this step, the ribosome changes from the pre-translocational (PRE) to the post-translocational (POST) state as the newly formed A-site-bound peptidyl-tRNA and P-site-bound deacylated tRNA move to the P and E sites, respectively. Catalyzes the coordinated movement of the two tRNA molecules, the mRNA and conformational changes in the ribosome. The polypeptide is Elongation factor G (Lactococcus lactis subsp. lactis (strain IL1403) (Streptococcus lactis)).